A 349-amino-acid polypeptide reads, in one-letter code: GTP 3',8-cyclase (349 aa).

The Radical SAM core domain occupies 24 to 249 (PFGRAVTYLR…KDMSYRTGGP (226 aa)). Arg33 provides a ligand contact to GTP. Cys40 and Cys44 together coordinate [4Fe-4S] cluster. Tyr46 is a binding site for S-adenosyl-L-methionine. Residue Cys47 participates in [4Fe-4S] cluster binding. Arg82 is a binding site for GTP. Gly86 contributes to the S-adenosyl-L-methionine binding site. Residue Thr116 coordinates GTP. Residue Ser140 participates in S-adenosyl-L-methionine binding. Residue Lys176 coordinates GTP. Met210 lines the S-adenosyl-L-methionine pocket. 2 residues coordinate [4Fe-4S] cluster: Cys273 and Cys276. 278–280 (RVR) lines the GTP pocket. Cys290 serves as a coordination point for [4Fe-4S] cluster.

Belongs to the radical SAM superfamily. MoaA family. In terms of assembly, monomer and homodimer. [4Fe-4S] cluster serves as cofactor.

The catalysed reaction is GTP + AH2 + S-adenosyl-L-methionine = (8S)-3',8-cyclo-7,8-dihydroguanosine 5'-triphosphate + 5'-deoxyadenosine + L-methionine + A + H(+). It functions in the pathway cofactor biosynthesis; molybdopterin biosynthesis. Functionally, catalyzes the cyclization of GTP to (8S)-3',8-cyclo-7,8-dihydroguanosine 5'-triphosphate. This chain is GTP 3',8-cyclase, found in Sinorhizobium medicae (strain WSM419) (Ensifer medicae).